Here is a 361-residue protein sequence, read N- to C-terminus: MSLSRLIINNFRNLTAVDLELNHGFNFFIGANGSGKTSLLEAIFYLGHGKSFKSHISNRIIKYNQEEFTLFGKIQEEKHECSVGLQKNRQGETILRINGESNKKIADLAYLLPMQVITPEGLTLLNGGPIYRRAFLDWGLFHQNTDFYHNWNSLKRLLKQRNAALVQTRHYNELKPWDVELSKFAQIVSQSRAVYVESILTYIEKNCQFFLPELEITATFYQGWEKERDYADLLAQGFERDRSVGYTMVGPQKADFRFRANGLPVEDVLSRGQLKLLMCALRLAQGEYFIAQKNRQCIFLIDDFASELDTQKCELLADRLYQSGSQVFVTAITQEQLKPIQGKRQDNATSFFIKDGKMQFM.

Gly30 to Thr37 is an ATP binding site.

It belongs to the RecF family.

The protein localises to the cytoplasm. Functionally, the RecF protein is involved in DNA metabolism; it is required for DNA replication and normal SOS inducibility. RecF binds preferentially to single-stranded, linear DNA. It also seems to bind ATP. The chain is DNA replication and repair protein RecF from Glaesserella parasuis serovar 5 (strain SH0165) (Haemophilus parasuis).